A 181-amino-acid polypeptide reads, in one-letter code: Transcription termination/antitermination protein NusG (181 aa).

Residues 130-161 (PGEMIRVNDGPFADFNGVVEEVDYEKSRLKVS) form the KOW domain.

This sequence belongs to the NusG family. As to quaternary structure, monomer. Interacts with the transcription termination factor Rho and with RNA polymerase.

In terms of biological role, participates in transcription elongation, termination and antitermination. In the absence of Rho, increases the rate of transcription elongation by the RNA polymerase (RNAP), probably by partially suppressing pausing. In the presence of Rho, modulates most Rho-dependent termination events by interacting with the RNAP to render the complex more susceptible to the termination activity of Rho. May be required to overcome a kinetic limitation of Rho to function at certain terminators. Also involved in ribosomal RNA transcriptional antitermination. The chain is Transcription termination/antitermination protein NusG from Buchnera aphidicola subsp. Acyrthosiphon pisum (strain APS) (Acyrthosiphon pisum symbiotic bacterium).